A 938-amino-acid polypeptide reads, in one-letter code: Inner tegument protein (938 aa).

The tract at residues 457-938 (EIVDLLFSST…LVEPLLLKLG (482 aa)) is interaction with large tegument protein.

The protein belongs to the herpesviridae inner tegument protein family. Interacts (via C-terminus) with the large tegument protein/LTP (via N-terminus).

Its subcellular location is the virion tegument. The protein resides in the host cytoplasm. The protein localises to the host nucleus. It is found in the host Golgi apparatus. It localises to the host trans-Golgi network. Functionally, plays an essential role in cytoplasmic secondary envelopment during viral egress. Interacts with the capsid via the large tegument protein/LTP and participates in its transport to the host trans-Golgi network (TGN) where secondary envelopment occurs. Modulates tegumentation and capsid accumulation at the viral assembly complex. The sequence is that of Inner tegument protein (U30) from Human herpesvirus 7 (strain JI) (HHV-7).